Consider the following 333-residue polypeptide: Holliday junction branch migration complex subunit RuvB (333 aa).

Positions 1–182 are large ATPase domain (RuvB-L); sequence MEERIVSAEA…FGVMARLEYY (182 aa). Residues leucine 21, arginine 22, glycine 63, lysine 66, threonine 67, threonine 68, 129 to 131, arginine 172, tyrosine 182, and arginine 219 contribute to the ATP site; that span reads EDF. Threonine 67 serves as a coordination point for Mg(2+). The segment at 183–253 is small ATPAse domain (RuvB-S); the sequence is KPEELAQIVE…RACSALEQLH (71 aa). Residues 256 to 333 are head domain (RuvB-H); the sequence is PLGLDHIDDK…AHYGVEKQNG (78 aa). Positions 311 and 316 each coordinate DNA.

It belongs to the RuvB family. Homohexamer. Forms an RuvA(8)-RuvB(12)-Holliday junction (HJ) complex. HJ DNA is sandwiched between 2 RuvA tetramers; dsDNA enters through RuvA and exits via RuvB. An RuvB hexamer assembles on each DNA strand where it exits the tetramer. Each RuvB hexamer is contacted by two RuvA subunits (via domain III) on 2 adjacent RuvB subunits; this complex drives branch migration. In the full resolvosome a probable DNA-RuvA(4)-RuvB(12)-RuvC(2) complex forms which resolves the HJ.

Its subcellular location is the cytoplasm. The catalysed reaction is ATP + H2O = ADP + phosphate + H(+). Its function is as follows. The RuvA-RuvB-RuvC complex processes Holliday junction (HJ) DNA during genetic recombination and DNA repair, while the RuvA-RuvB complex plays an important role in the rescue of blocked DNA replication forks via replication fork reversal (RFR). RuvA specifically binds to HJ cruciform DNA, conferring on it an open structure. The RuvB hexamer acts as an ATP-dependent pump, pulling dsDNA into and through the RuvAB complex. RuvB forms 2 homohexamers on either side of HJ DNA bound by 1 or 2 RuvA tetramers; 4 subunits per hexamer contact DNA at a time. Coordinated motions by a converter formed by DNA-disengaged RuvB subunits stimulates ATP hydrolysis and nucleotide exchange. Immobilization of the converter enables RuvB to convert the ATP-contained energy into a lever motion, pulling 2 nucleotides of DNA out of the RuvA tetramer per ATP hydrolyzed, thus driving DNA branch migration. The RuvB motors rotate together with the DNA substrate, which together with the progressing nucleotide cycle form the mechanistic basis for DNA recombination by continuous HJ branch migration. Branch migration allows RuvC to scan DNA until it finds its consensus sequence, where it cleaves and resolves cruciform DNA. The protein is Holliday junction branch migration complex subunit RuvB of Shouchella clausii (strain KSM-K16) (Alkalihalobacillus clausii).